A 370-amino-acid chain; its full sequence is MFASILGKIPQYSTISSKCSLKECRKVKKVENSDEIGEIIHRDFLDPFCNEYVLIGEEETSLGINYLQFEEEIRTFEIRDSDIIVASYPKAGTTWTQELVWLIGNDLDFKAAEEHLDKRFPHFELCTIVNFAKMTEMLGSTRPEYIGNSINYLRDLEGTRFIKTHLTYNLLPEQILNGNRKPKIIYVMRDPKDVCVSYYHHGRLIQGWRADFQNFSKVFLSEKIMFGSYWKHVLGYWEHRDKPNVLILTYEEMKKDLLSVIRKTAQFLDKKLNENKIPQLLKHLSFESMKNNRAVNQQDKIESRMKHKLVPEQGAFMRSGTSQNYKGEMSEELILKFDEWTKKSISGSSFVTEPIADLYLNTSQKSVPKM.

90 to 95 (KAGTTW) is a 3'-phosphoadenylyl sulfate binding site. The active-site Proton acceptor is H165. 3'-phosphoadenylyl sulfate-binding positions include R189, S197, Y250, 284–289 (LSFESM), and 316–320 (FMRSG).

Belongs to the sulfotransferase 1 family.

It carries out the reaction firefly D-luciferin + 3'-phosphoadenylyl sulfate = firefly D-sulfoluciferin + adenosine 3',5'-bisphosphate + H(+). The enzyme catalyses firefly L-luciferin + 3'-phosphoadenylyl sulfate = firefly L-sulfoluciferin + adenosine 3',5'-bisphosphate + H(+). Sulfoluciferin formation is inhibited by the product adenosine 3',5'-bisphosphate. In terms of biological role, catalyzes the production of firefly sulfoluciferin from luciferin using the sulfo-donor 3'-phosphoadenylyl sulfate (PAPS). Is also able to catalyze the reverse reaction, i.e. the adenosine 3',5'-bisphosphate-dependent desulfonation of sulfoluciferin. Can use either D- or L-luciferin stereoisomer as substrate. Sulfoluciferin, which is not a substrate of P.pyralis luciferase, likely serves as a luciferin storage form in fireflies. The sequence is that of Luciferin sulfotransferase from Photinus pyralis (Common eastern firefly).